An 831-amino-acid chain; its full sequence is MWALRSLLRPLGLRTMSQGSARRPRPSKDPLRHLRTREKRGPGPGGPNTVYLQVVAAGGRDAGAALYVFSEYNRYLFNCGEGVQRLMQEHKLKVARLDNIFLTRMHWSNVGGLCGMILTLKETGLPKCVLSGPPQLEKYLEAIKIFSGPLKGIELAVRPHSAPEYKDETMTVYQVPIHSERRCGKQQPSQSPRTSPNRLSPKQSSDSGSAENGQCPPEDSSAGANRKAWGRDPSLVVAFVCKLHLRKGNFLVLKAKELGLPVGTAAIAPIIAAVKDGKSITYEGREIAAEELCTPPDPGLVFIVVECPDEGFILPICENDTFKRYQAEADAPVALVVHIAPESVLIDSRYQQWMERFGPDTQHLILNENCPSVHNLRSHKIQTQLSLIHPDIFPQLTSFYSKEEGSTLSVPTVRGECLLKYQLRPKREWQRDTTLDCNTDEFIAEALELPSFQESVEEYRKNVQENPAPAEKRSQYPEIVFLGTGSAIPMKIRNVSSTLVNLSPDKSVLLDCGEGTFGQLCRHYGQQIDRVLCSLTAVFVSHLHADHHTGLLNILLQREHALASLGKPFQPLLVVAPTQLRAWLQQYHNHCQEILHHVSMIPAKCLQKGAEVSNTTLERLISLLLETCDLEEFQTCLVRHCKHAFGCALVHSSGWKVVYSGDTMPCEALVQMGKDATLLIHEATLEDGLEEEAVEKTHSTTSQAINVGMRMNAEFIMLNHFSQRYAKIPLFSPDFNEKVGIAFDHMKVCFGDFPTVPKLIPPLKALFAGDIEEMVERREKRELRLVRAALLTQQADSPEDREPQQKRAHTDEPHSPQSKKESVANTLGARV.

The N-terminal 16 residues, 1 to 16, are a transit peptide targeting the mitochondrion; the sequence is MWALRSLLRPLGLRTM. 2 disordered regions span residues 15 to 47 and 179 to 227; these read TMSQ…PGGP and SERR…ANRK. Polar residues predominate over residues 186-212; it reads QQPSQSPRTSPNRLSPKQSSDSGSAEN. A phosphoserine mark is found at serine 191, serine 195, serine 200, serine 204, and serine 732. Positions 791–831 are disordered; the sequence is LTQQADSPEDREPQQKRAHTDEPHSPQSKKESVANTLGARV. Threonine 792 bears the Phosphothreonine mark. 2 positions are modified to phosphoserine: serine 797 and serine 815. Over residues 798–822 the composition is skewed to basic and acidic residues; the sequence is PEDREPQQKRAHTDEPHSPQSKKES.

The protein belongs to the RNase Z family. Homodimer. Interacts with PTCD1. The cofactor is Zn(2+).

It localises to the mitochondrion. Its subcellular location is the mitochondrion matrix. The protein resides in the mitochondrion nucleoid. It is found in the nucleus. The catalysed reaction is Endonucleolytic cleavage of RNA, removing extra 3' nucleotides from tRNA precursor, generating 3' termini of tRNAs. A 3'-hydroxy group is left at the tRNA terminus and a 5'-phosphoryl group is left at the trailer molecule.. Zinc phosphodiesterase, which displays mitochondrial tRNA 3'-processing endonuclease activity. Involved in tRNA maturation, by removing a 3'-trailer from precursor tRNA. Associates with mitochondrial DNA complexes at the nucleoids to initiate RNA processing and ribosome assembly. The polypeptide is Zinc phosphodiesterase ELAC protein 2 (Elac2) (Mus musculus (Mouse)).